The chain runs to 209 residues: Outer-membrane lipoprotein carrier protein (209 aa).

The signal sequence occupies residues 1 to 21; that stretch reads MHRQLRYAVLATALFASTAFA.

It belongs to the LolA family. Monomer.

The protein localises to the periplasm. Functionally, participates in the translocation of lipoproteins from the inner membrane to the outer membrane. Only forms a complex with a lipoprotein if the residue after the N-terminal Cys is not an aspartate (The Asp acts as a targeting signal to indicate that the lipoprotein should stay in the inner membrane). The sequence is that of Outer-membrane lipoprotein carrier protein from Xanthomonas campestris pv. campestris (strain 8004).